The following is an 80-amino-acid chain: Defensin-like protein CAL1 (80 aa).

A signal peptide spans 1–31 (MAPSRRMVASAFLLLAILVATEMGTTKVAEA). Cystine bridges form between Cys-34–Cys-80, Cys-45–Cys-65, Cys-51–Cys-74, and Cys-55–Cys-76.

The protein belongs to the DEFL family. In terms of tissue distribution, expressed preferentially in root exodermis and xylem parenchyma cells in vasculature of root and flag leaf sheath.

It localises to the secreted. The protein resides in the extracellular space. Plant defensin-like protein involved in accumulation of cadmium (Cd) in rice leaves. Mediates Cd efflux from cytosol into extracellular spaces via chelation. This drives Cd secretion from xylem parenchyma cells into the xylem vessels, hence lowering Cd levels in cytosol meanwhile promoting Cd translocation from roots to shoots. The polypeptide is Defensin-like protein CAL1 (Oryza sativa subsp. japonica (Rice)).